The following is a 148-amino-acid chain: UPF0260 protein KPN78578_22800 (148 aa).

Belongs to the UPF0260 family.

The chain is UPF0260 protein KPN78578_22800 from Klebsiella pneumoniae subsp. pneumoniae (strain ATCC 700721 / MGH 78578).